A 133-amino-acid polypeptide reads, in one-letter code: Small ribosomal subunit protein bS6 (133 aa).

It belongs to the bacterial ribosomal protein bS6 family.

In terms of biological role, binds together with bS18 to 16S ribosomal RNA. In Chlorobium luteolum (strain DSM 273 / BCRC 81028 / 2530) (Pelodictyon luteolum), this protein is Small ribosomal subunit protein bS6.